Here is a 168-residue protein sequence, read N- to C-terminus: Photosystem I assembly protein Ycf3 (168 aa).

TPR repeat units lie at residues 35-68 (AFTY…EIDP), 72-105 (SYIL…NPFL), and 120-153 (GEQA…TPGN).

This sequence belongs to the Ycf3 family.

It is found in the plastid. The protein localises to the chloroplast thylakoid membrane. Essential for the assembly of the photosystem I (PSI) complex. May act as a chaperone-like factor to guide the assembly of the PSI subunits. In Piper cenocladum (Ant piper), this protein is Photosystem I assembly protein Ycf3.